A 145-amino-acid chain; its full sequence is Aspartate 1-decarboxylase (145 aa).

Catalysis depends on serine 26, which acts as the Schiff-base intermediate with substrate; via pyruvic acid. Serine 26 is modified (pyruvic acid (Ser)). Threonine 58 is a substrate binding site. Tyrosine 59 (proton donor) is an active-site residue. 74 to 76 (GGA) contributes to the substrate binding site.

It belongs to the PanD family. In terms of assembly, heterooctamer of four alpha and four beta subunits. It depends on pyruvate as a cofactor. Post-translationally, is synthesized initially as an inactive proenzyme, which is activated by self-cleavage at a specific serine bond to produce a beta-subunit with a hydroxyl group at its C-terminus and an alpha-subunit with a pyruvoyl group at its N-terminus.

Its subcellular location is the cytoplasm. The enzyme catalyses L-aspartate + H(+) = beta-alanine + CO2. Its pathway is cofactor biosynthesis; (R)-pantothenate biosynthesis; beta-alanine from L-aspartate: step 1/1. Catalyzes the pyruvoyl-dependent decarboxylation of aspartate to produce beta-alanine. This is Aspartate 1-decarboxylase from Synechocystis sp. (strain ATCC 27184 / PCC 6803 / Kazusa).